We begin with the raw amino-acid sequence, 47 residues long: Large ribosomal subunit protein bL36B (47 aa).

This sequence belongs to the bacterial ribosomal protein bL36 family.

This Pectobacterium atrosepticum (strain SCRI 1043 / ATCC BAA-672) (Erwinia carotovora subsp. atroseptica) protein is Large ribosomal subunit protein bL36B.